A 174-amino-acid polypeptide reads, in one-letter code: U1 small nuclear ribonucleoprotein C (174 aa).

The Matrin-type zinc-finger motif lies at 4 to 36 (YYCDYCDKYLTHDSPSVRKSHTVGKQHKLAVQL). 2 stretches are compositionally biased toward low complexity: residues 82-109 (QQQQ…QQGM) and 122-140 (PHQF…FQPP). Residues 82 to 174 (QQQQQQQQQQ…QHNQPTIPGL (93 aa)) are disordered. Over residues 141-163 (HHQHHPHQQHQQHQQHQHQHQHQ) the composition is skewed to basic residues. Over residues 164–174 (QQHNQPTIPGL) the composition is skewed to low complexity.

The protein belongs to the U1 small nuclear ribonucleoprotein C family. In terms of assembly, component of the U1 snRNP. The U1 snRNP is composed of the U1 snRNA and the 7 core Sm proteins SNRPB, SNRPD1, SNRPD2, SNRPD3, SNRPE, SNRPF and SNRPG that assemble in a heptameric protein ring on the Sm site of the small nuclear RNA to form the core snRNP, and at least 3 U1 snRNP-specific proteins SNRNP70/U1-70K, SNRPA/U1-A and SNRPC/U1-C. SNRPC/U1-C interacts with U1 snRNA and the 5' splice-site region of the pre-mRNA.

The protein resides in the nucleus. Functionally, component of the spliceosomal U1 snRNP, which is essential for recognition of the pre-mRNA 5' splice-site and the subsequent assembly of the spliceosome. SNRPC/U1-C is directly involved in initial 5' splice-site recognition for both constitutive and regulated alternative splicing. The interaction with the 5' splice-site seems to precede base-pairing between the pre-mRNA and the U1 snRNA. Stimulates commitment or early (E) complex formation by stabilizing the base pairing of the 5' end of the U1 snRNA and the 5' splice-site region. In Dictyostelium discoideum (Social amoeba), this protein is U1 small nuclear ribonucleoprotein C.